Consider the following 567-residue polypeptide: Dihydrolipoyl dehydrogenase 2, chloroplastic (567 aa).

The transit peptide at 1 to 67 (MQSVLSLSFS…HIQSRRIEVS (67 aa)) directs the protein to the chloroplast. FAD is bound by residues 114–122 (EGDVVGGTC), lysine 131, glycine 197, and 221–223 (TGS). Cysteines 122 and 127 form a disulfide. Residues 258 to 265 (GSGYIGLE), glutamate 281, and glycine 354 each bind NAD(+). Residues aspartate 400 and 406-409 (MLAH) each bind FAD. The active-site Proton acceptor is histidine 536.

This sequence belongs to the class-I pyridine nucleotide-disulfide oxidoreductase family. As to quaternary structure, homodimer. Part of the plastidial pyruvate dehydrogenase complex (PDC) containing multiple copies of three enzymatic components: pyruvate dehydrogenase (E1), dihydrolipoamide acetyltransferase (E2) and lipoamide dehydrogenase (E3). The cofactor is FAD. In terms of tissue distribution, expressed mainly in flower buds and immature siliques, and to a lesser extent in flowers.

The protein localises to the plastid. Its subcellular location is the chloroplast stroma. The enzyme catalyses N(6)-[(R)-dihydrolipoyl]-L-lysyl-[protein] + NAD(+) = N(6)-[(R)-lipoyl]-L-lysyl-[protein] + NADH + H(+). Functionally, lipoamide dehydrogenase is a component of the plastidial pyruvate dehydrogenase complex (PDC). The chain is Dihydrolipoyl dehydrogenase 2, chloroplastic (LPD2) from Arabidopsis thaliana (Mouse-ear cress).